The following is a 420-amino-acid chain: Protein translocase subunit SecY (420 aa).

A run of 10 helical transmembrane segments spans residues 9–29 (ILITLGFLFLYRVLAYIPIPG), 61–81 (LSIISLGIMPYITSSIIMELL), 104–124 (IVRYLTILITLIQAVSVSVGL), 141–161 (VFMIVSAFSMLTGTMLLMWIG), 173–193 (ISLIIFAGIVSGIPSAISGTF), 203–223 (ILMLIGIVLIVLATIFAIIYV), 257–277 (LSGVIPPIFASALLVFPSTIL), 300–320 (YNILMFLLIIFFAYFYSSIVF), 355–375 (KLTLWGSLYLALISTVPWILV), and 377–397 (AMGVPFYFGGTAVLIVVQVAI).

It belongs to the SecY/SEC61-alpha family. In terms of assembly, component of the Sec protein translocase complex. Heterotrimer consisting of SecY, SecE and SecG subunits. The heterotrimers can form oligomers, although 1 heterotrimer is thought to be able to translocate proteins. Interacts with the ribosome. Interacts with SecDF, and other proteins may be involved. Interacts with SecA.

The protein localises to the cell inner membrane. Functionally, the central subunit of the protein translocation channel SecYEG. Consists of two halves formed by TMs 1-5 and 6-10. These two domains form a lateral gate at the front which open onto the bilayer between TMs 2 and 7, and are clamped together by SecE at the back. The channel is closed by both a pore ring composed of hydrophobic SecY resides and a short helix (helix 2A) on the extracellular side of the membrane which forms a plug. The plug probably moves laterally to allow the channel to open. The ring and the pore may move independently. The chain is Protein translocase subunit SecY from Helicobacter pylori (strain ATCC 700392 / 26695) (Campylobacter pylori).